The sequence spans 365 residues: tRNA/tmRNA (uracil-C(5))-methyltransferase (365 aa).

Residues glutamine 189, tyrosine 217, asparagine 222, glutamate 238, and aspartate 298 each coordinate S-adenosyl-L-methionine. The active-site Nucleophile is the cysteine 323. The active-site Proton acceptor is glutamate 357.

Belongs to the class I-like SAM-binding methyltransferase superfamily. RNA M5U methyltransferase family. TrmA subfamily.

The enzyme catalyses uridine(54) in tRNA + S-adenosyl-L-methionine = 5-methyluridine(54) in tRNA + S-adenosyl-L-homocysteine + H(+). The catalysed reaction is uridine(341) in tmRNA + S-adenosyl-L-methionine = 5-methyluridine(341) in tmRNA + S-adenosyl-L-homocysteine + H(+). Dual-specificity methyltransferase that catalyzes the formation of 5-methyluridine at position 54 (m5U54) in all tRNAs, and that of position 341 (m5U341) in tmRNA (transfer-mRNA). This chain is tRNA/tmRNA (uracil-C(5))-methyltransferase, found in Shewanella baltica (strain OS155 / ATCC BAA-1091).